Here is a 76-residue protein sequence, read N- to C-terminus: Small ribosomal subunit protein bS18 (76 aa).

It belongs to the bacterial ribosomal protein bS18 family. As to quaternary structure, part of the 30S ribosomal subunit. Forms a tight heterodimer with protein bS6.

Binds as a heterodimer with protein bS6 to the central domain of the 16S rRNA, where it helps stabilize the platform of the 30S subunit. This Xylella fastidiosa (strain 9a5c) protein is Small ribosomal subunit protein bS18.